The following is a 103-amino-acid chain: Integration host factor subunit alpha (103 aa).

The disordered stretch occupies residues 55-74 (CREKPQRPGRNPKTGEEMPI).

This sequence belongs to the bacterial histone-like protein family. Heterodimer of an alpha and a beta chain.

Its function is as follows. This protein is one of the two subunits of integration host factor, a specific DNA-binding protein that functions in genetic recombination as well as in transcriptional and translational control. The polypeptide is Integration host factor subunit alpha (Thiobacillus denitrificans (strain ATCC 25259 / T1)).